The chain runs to 288 residues: Bifunctional protein FolD (288 aa).

Residues 166 to 168 (GAS) and Ile-232 each bind NADP(+).

This sequence belongs to the tetrahydrofolate dehydrogenase/cyclohydrolase family. As to quaternary structure, homodimer.

The catalysed reaction is (6R)-5,10-methylene-5,6,7,8-tetrahydrofolate + NADP(+) = (6R)-5,10-methenyltetrahydrofolate + NADPH. It catalyses the reaction (6R)-5,10-methenyltetrahydrofolate + H2O = (6R)-10-formyltetrahydrofolate + H(+). The protein operates within one-carbon metabolism; tetrahydrofolate interconversion. In terms of biological role, catalyzes the oxidation of 5,10-methylenetetrahydrofolate to 5,10-methenyltetrahydrofolate and then the hydrolysis of 5,10-methenyltetrahydrofolate to 10-formyltetrahydrofolate. The polypeptide is Bifunctional protein FolD (Escherichia coli O8 (strain IAI1)).